We begin with the raw amino-acid sequence, 263 residues long: S-adenosylmethionine decarboxylase proenzyme (263 aa).

The active-site Schiff-base intermediate with substrate; via pyruvic acid is the serine 113. Serine 113 carries the pyruvic acid (Ser); by autocatalysis modification. Histidine 118 (proton acceptor; for processing activity) is an active-site residue. The active-site Proton donor; for catalytic activity is cysteine 141.

Belongs to the prokaryotic AdoMetDC family. Type 2 subfamily. In terms of assembly, heterooctamer of four alpha and four beta chains arranged as a tetramer of alpha/beta heterodimers. The cofactor is pyruvate. Is synthesized initially as an inactive proenzyme. Formation of the active enzyme involves a self-maturation process in which the active site pyruvoyl group is generated from an internal serine residue via an autocatalytic post-translational modification. Two non-identical subunits are generated from the proenzyme in this reaction, and the pyruvate is formed at the N-terminus of the alpha chain, which is derived from the carboxyl end of the proenzyme. The post-translation cleavage follows an unusual pathway, termed non-hydrolytic serinolysis, in which the side chain hydroxyl group of the serine supplies its oxygen atom to form the C-terminus of the beta chain, while the remainder of the serine residue undergoes an oxidative deamination to produce ammonia and the pyruvoyl group blocking the N-terminus of the alpha chain.

The catalysed reaction is S-adenosyl-L-methionine + H(+) = S-adenosyl 3-(methylsulfanyl)propylamine + CO2. The protein operates within amine and polyamine biosynthesis; S-adenosylmethioninamine biosynthesis; S-adenosylmethioninamine from S-adenosyl-L-methionine: step 1/1. Catalyzes the decarboxylation of S-adenosylmethionine to S-adenosylmethioninamine (dcAdoMet), the propylamine donor required for the synthesis of the polyamines spermine and spermidine from the diamine putrescine. The protein is S-adenosylmethionine decarboxylase proenzyme of Marinobacter nauticus (strain ATCC 700491 / DSM 11845 / VT8) (Marinobacter aquaeolei).